Consider the following 376-residue polypeptide: Polycomb group protein FIE1 (376 aa).

6 WD repeats span residues 85–127, 130–170, 176–216, 242–279, 291–332, and 339–376; these read DKDE…LLKT, GHGD…CILI, GHRN…PYVE, VHSN…QSPG, VPEC…PVLT, and QCKS…HPKA.

This sequence belongs to the WD repeat ESC family. As to quaternary structure, interacts with EZ1. Component of the polycomb repressive complex 2 (PRC2), composed of the core PRC2 components EMF2B, EZ1 and CLF. PRC2 methylates 'Lys-27' residues of histone H3 (H3K27me3), leading to transcriptional repression of the affected target gene. As to expression, widely expressed.

Functionally, polycomb group (PcG) protein. PcG proteins act by forming multiprotein complexes, which are required to maintain the transcriptionally repressive state of homeotic genes throughout development. PcG proteins are not required to initiate repression, but to maintain it during later stages of development. They act via the methylation of histones, rendering chromatin heritably changed in its expressibility. Involved in the regulation of seed endosperm development, grain filling and seed dormancy. FIE2-containing PcG complex in seed endosperm regulates the expression of various transcription factors by trimethylation on histone H3 'Lys-27' (H3K27me3) of target genes. Involved in the overall expression regulation of a large number of nutrient metabolism genes. Involved in the regulation of seed endosperm development. Involved in the regulation of vegetative development, particularly in stem cell maintenance in the root system, where it maintains the suppression of key differentiation regulators. The chain is Polycomb group protein FIE1 from Oryza sativa subsp. japonica (Rice).